A 189-amino-acid chain; its full sequence is Large ribosomal subunit protein uL5 (189 aa).

This sequence belongs to the universal ribosomal protein uL5 family. As to quaternary structure, part of the 50S ribosomal subunit; part of the 5S rRNA/L5/L18/L25 subcomplex. Contacts the 5S rRNA and the P site tRNA. Forms a bridge to the 30S subunit in the 70S ribosome.

Its function is as follows. This is one of the proteins that bind and probably mediate the attachment of the 5S RNA into the large ribosomal subunit, where it forms part of the central protuberance. In the 70S ribosome it contacts protein S13 of the 30S subunit (bridge B1b), connecting the 2 subunits; this bridge is implicated in subunit movement. Contacts the P site tRNA; the 5S rRNA and some of its associated proteins might help stabilize positioning of ribosome-bound tRNAs. The polypeptide is Large ribosomal subunit protein uL5 (Kocuria rhizophila (strain ATCC 9341 / DSM 348 / NBRC 103217 / DC2201)).